The chain runs to 73 residues: Translation initiation factor IF-1 1 (73 aa).

Residues 1-72 (MAKEELIEFG…TKGRINFRHK (72 aa)) enclose the S1-like domain.

The protein belongs to the IF-1 family. Component of the 30S ribosomal translation pre-initiation complex which assembles on the 30S ribosome in the order IF-2 and IF-3, IF-1 and N-formylmethionyl-tRNA(fMet); mRNA recruitment can occur at any time during PIC assembly.

Its subcellular location is the cytoplasm. Its function is as follows. One of the essential components for the initiation of protein synthesis. Stabilizes the binding of IF-2 and IF-3 on the 30S subunit to which N-formylmethionyl-tRNA(fMet) subsequently binds. Helps modulate mRNA selection, yielding the 30S pre-initiation complex (PIC). Upon addition of the 50S ribosomal subunit IF-1, IF-2 and IF-3 are released leaving the mature 70S translation initiation complex. The protein is Translation initiation factor IF-1 1 of Cupriavidus metallidurans (strain ATCC 43123 / DSM 2839 / NBRC 102507 / CH34) (Ralstonia metallidurans).